A 394-amino-acid polypeptide reads, in one-letter code: Flap endonuclease 1 (394 aa).

The interval 1 to 104 is N-domain; sequence MGIKQLFTII…GELARRYQRK (104 aa). Asp34 provides a ligand contact to Mg(2+). Arg47 and Arg70 together coordinate DNA. Residues Asp86, Glu158, Glu160, Asp179, and Asp181 each coordinate Mg(2+). Residues 122–253 are I-domain; it reads DVEKFSRRTV…STALKLIREH (132 aa). A DNA-binding site is contributed by Glu158. DNA is bound by residues Gly231 and Asp233. A Mg(2+)-binding site is contributed by Asp233. An interaction with PCNA region spans residues 340–348; that stretch reads QQQRLEGFF. Residues 358–394 form a disordered region; sequence QKAHKRKLEVKAEEAKKKLKAEKKEKAKAKARPRGTA. A compositionally biased stretch (basic residues) spans 374 to 394; that stretch reads KKLKAEKKEKAKAKARPRGTA.

Belongs to the XPG/RAD2 endonuclease family. FEN1 subfamily. As to quaternary structure, interacts with PCNA. Three molecules of FEN1 bind to one PCNA trimer with each molecule binding to one PCNA monomer. PCNA stimulates the nuclease activity without altering cleavage specificity. It depends on Mg(2+) as a cofactor. Phosphorylated. Phosphorylation upon DNA damage induces relocalization to the nuclear plasma.

Its subcellular location is the nucleus. The protein resides in the nucleolus. It is found in the nucleoplasm. The protein localises to the mitochondrion. Structure-specific nuclease with 5'-flap endonuclease and 5'-3' exonuclease activities involved in DNA replication and repair. During DNA replication, cleaves the 5'-overhanging flap structure that is generated by displacement synthesis when DNA polymerase encounters the 5'-end of a downstream Okazaki fragment. It enters the flap from the 5'-end and then tracks to cleave the flap base, leaving a nick for ligation. Also involved in the long patch base excision repair (LP-BER) pathway, by cleaving within the apurinic/apyrimidinic (AP) site-terminated flap. Acts as a genome stabilization factor that prevents flaps from equilibrating into structures that lead to duplications and deletions. Also possesses 5'-3' exonuclease activity on nicked or gapped double-stranded DNA, and exhibits RNase H activity. Also involved in replication and repair of rDNA and in repairing mitochondrial DNA. This is Flap endonuclease 1 from Pyricularia oryzae (strain 70-15 / ATCC MYA-4617 / FGSC 8958) (Rice blast fungus).